The following is a 351-amino-acid chain: Uroporphyrinogen decarboxylase (351 aa).

Substrate contacts are provided by residues 26–30 (RQAGR), Asp76, Tyr153, Ser208, and His323.

This sequence belongs to the uroporphyrinogen decarboxylase family. In terms of assembly, homodimer.

It is found in the cytoplasm. It carries out the reaction uroporphyrinogen III + 4 H(+) = coproporphyrinogen III + 4 CO2. The protein operates within porphyrin-containing compound metabolism; protoporphyrin-IX biosynthesis; coproporphyrinogen-III from 5-aminolevulinate: step 4/4. Catalyzes the decarboxylation of four acetate groups of uroporphyrinogen-III to yield coproporphyrinogen-III. This is Uroporphyrinogen decarboxylase from Prochlorococcus marinus (strain MIT 9211).